Reading from the N-terminus, the 385-residue chain is Succinate--CoA ligase [ADP-forming] subunit beta (385 aa).

The ATP-grasp domain occupies 9–241 (KELLRDFGIN…IDEEEPSELE (233 aa)). Residues lysine 46, 53 to 55 (GRG), glutamate 99, threonine 102, and glutamate 107 contribute to the ATP site. Asparagine 196 and aspartate 210 together coordinate Mg(2+). Substrate-binding positions include asparagine 261 and 318–320 (GIV).

It belongs to the succinate/malate CoA ligase beta subunit family. In terms of assembly, heterotetramer of two alpha and two beta subunits. Mg(2+) is required as a cofactor.

It catalyses the reaction succinate + ATP + CoA = succinyl-CoA + ADP + phosphate. The enzyme catalyses GTP + succinate + CoA = succinyl-CoA + GDP + phosphate. Its pathway is carbohydrate metabolism; tricarboxylic acid cycle; succinate from succinyl-CoA (ligase route): step 1/1. Succinyl-CoA synthetase functions in the citric acid cycle (TCA), coupling the hydrolysis of succinyl-CoA to the synthesis of either ATP or GTP and thus represents the only step of substrate-level phosphorylation in the TCA. The beta subunit provides nucleotide specificity of the enzyme and binds the substrate succinate, while the binding sites for coenzyme A and phosphate are found in the alpha subunit. This Campylobacter fetus subsp. fetus (strain 82-40) protein is Succinate--CoA ligase [ADP-forming] subunit beta.